We begin with the raw amino-acid sequence, 414 residues long: Membrane protein UL43 (414 aa).

The next 6 membrane-spanning stretches (helical) occupy residues 39-59, 61-81, 96-116, 121-141, 148-168, and 184-204; these read GFAH…VVLS, GPYA…LGFL, AWLR…GEAG, VPGP…LLVL, LFLL…VGGL, and AAAL…GDSF. The interval 225–253 is disordered; that stretch reads PRYAPEDAERPTDHGPLLPSTHHQRSPRV. The segment covering 228-237 has biased composition (basic and acidic residues); it reads APEDAERPTD. The next 2 membrane-spanning stretches (helical) occupy residues 339-359 and 383-403; these read GLMF…AVWI and ATLR…GVLV.

Belongs to the alphaherpesvirinae HHV-1 UL43 family.

It is found in the membrane. This Homo sapiens (Human) protein is Membrane protein UL43.